An 87-amino-acid chain; its full sequence is Mu-theraphotoxin-Cg1a (87 aa).

The first 21 residues, 1–21, serve as a signal peptide directing secretion; the sequence is MKVLVLITLAVLGAMFVWTSA. The propeptide occupies 22 to 50; it reads AELEERGSDQRDSPAWVKSMERIFQSEER. 3 cysteine pairs are disulfide-bonded: Cys52/Cys66, Cys59/Cys71, and Cys65/Cys79.

It belongs to the neurotoxin 10 (Hwtx-1) family. 39 (Jztx-34) subfamily. Expressed by the venom gland.

The protein resides in the secreted. In terms of biological role, potent and selective inhibitor of hNav1.7/SCN9A (IC(50)=610 nM). Also shows a weak activity towards Nav1.3/SCN3A (IC(50)=7950 nM). In addition, inhibits voltage-gated potassium channels (Kv) in rat DRG neurons. It does not alter the voltage dependence of activation, but it causes a small hyperpolarizing shift in the steady-state inactivations of Nav1.7/SNC9A. Chimera experiments show that the toxin binds to the DIIS3-S4 linker (site 4) of Nav1.7/SCN9A, whereas Nav1.7/SCN9A Asp-827 residue is shown by substitution experiments to be critical for its sensitivity. The toxin traps the domain II voltage sensor in the closed configuration, and not in an outward position. In vivo, shows analgesic activity in three rodent pain models (formalin-induced, acid-induced, and thermal). In Chilobrachys guangxiensis (Chinese earth tiger tarantula), this protein is Mu-theraphotoxin-Cg1a.